Here is a 417-residue protein sequence, read N- to C-terminus: Gamma-glutamyl phosphate reductase (417 aa).

The protein belongs to the gamma-glutamyl phosphate reductase family.

Its subcellular location is the cytoplasm. The enzyme catalyses L-glutamate 5-semialdehyde + phosphate + NADP(+) = L-glutamyl 5-phosphate + NADPH + H(+). It participates in amino-acid biosynthesis; L-proline biosynthesis; L-glutamate 5-semialdehyde from L-glutamate: step 2/2. In terms of biological role, catalyzes the NADPH-dependent reduction of L-glutamate 5-phosphate into L-glutamate 5-semialdehyde and phosphate. The product spontaneously undergoes cyclization to form 1-pyrroline-5-carboxylate. The chain is Gamma-glutamyl phosphate reductase from Escherichia coli O8 (strain IAI1).